The primary structure comprises 432 residues: DEAD-box ATP-dependent RNA helicase 56 (432 aa).

A coiled-coil region spans residues 1–28; it reads MAEAEVKDNEVYEEDLVDYEEEVENGTD. A Q motif motif is present at residues 51-79; sequence SGFRDFLLKPELLRAIQDCGFEHPSEVQH. In terms of domain architecture, Helicase ATP-binding spans 82–255; sequence IPQAILGMDV…KKFMQDPMEI (174 aa). 95–102 contributes to the ATP binding site; the sequence is AKSGMGKT. The short motif at 202–205 is the DEAD box element; that stretch reads DECD. Residues 283 to 428 form the Helicase C-terminal domain; sequence KLNDLLDALD…ELPEQIDTST (146 aa).

It belongs to the DEAD box helicase family. DECD subfamily. Homodimer and heterodimer with AIP2. Interacts with API5.

It localises to the nucleus. It carries out the reaction ATP + H2O = ADP + phosphate + H(+). In terms of biological role, ATP-binding RNA helicase involved in pre-mRNA splicing. Required for the export of mRNA out of the nucleus. Required for tapetal programmed cell death (PCD) and degeneration during anther development. Forms dimer with AIP2 and binds the promoter region of the cysteine protease CP1. Can complement the yeast RNA helicase SUB2. Plants silencing AIP1 and AIP2 are male sterile. This is DEAD-box ATP-dependent RNA helicase 56 from Oryza sativa subsp. japonica (Rice).